A 261-amino-acid chain; its full sequence is THO complex subunit THP2 (261 aa).

As to quaternary structure, component of the THO complex, which is composed of HPR1, MFT1, THO2 and THP2. Together with SUB2, TEX1 and YRA1, THO forms the transcription/export (TREX) complex. THO associates with DNA and RNA in vitro.

The protein resides in the nucleus. Functionally, component the THO subcomplex of the TREX complex, which operates in coupling transcription elongation to mRNA export. The THO complex is recruited to transcribed genes and moves along the gene with the elongating polymerase during transcription. THO is important for stabilizing nascent RNA in the RNA polymerase II elongation complex by preventing formation of DNA:RNA hybrids behind the elongating polymerase. It functions in cotranscriptional formation of an export-competent messenger ribonucleoprotein particle (mRNP) by facilitating the loading of ATP-dependent RNA helicase SUB2 and the mRNA export factor YRA1 along the nascent mRNA. This chain is THO complex subunit THP2 (THP2), found in Saccharomyces cerevisiae (strain ATCC 204508 / S288c) (Baker's yeast).